The sequence spans 581 residues: Putative phospholipase B-like 3 (581 aa).

The first 16 residues, 1–16, serve as a signal peptide directing secretion; that stretch reads MKLLFFLFGLIFAVEQ. 9 N-linked (GlcNAc...) asparagine glycosylation sites follow: asparagine 50, asparagine 82, asparagine 132, asparagine 169, asparagine 215, asparagine 309, asparagine 543, asparagine 546, and asparagine 560.

This sequence belongs to the phospholipase B-like family.

It is found in the secreted. Functionally, putative phospholipase. The polypeptide is Putative phospholipase B-like 3 (Caenorhabditis elegans).